The primary structure comprises 186 residues: UPF0301 protein Sfri_2850 (186 aa).

Belongs to the UPF0301 (AlgH) family.

The protein is UPF0301 protein Sfri_2850 of Shewanella frigidimarina (strain NCIMB 400).